The primary structure comprises 279 residues: Tryptophan synthase alpha chain (279 aa).

Active-site proton acceptor residues include glutamate 50 and aspartate 61.

This sequence belongs to the TrpA family. Tetramer of two alpha and two beta chains.

It carries out the reaction (1S,2R)-1-C-(indol-3-yl)glycerol 3-phosphate + L-serine = D-glyceraldehyde 3-phosphate + L-tryptophan + H2O. It functions in the pathway amino-acid biosynthesis; L-tryptophan biosynthesis; L-tryptophan from chorismate: step 5/5. Functionally, the alpha subunit is responsible for the aldol cleavage of indoleglycerol phosphate to indole and glyceraldehyde 3-phosphate. This is Tryptophan synthase alpha chain from Brucella melitensis biotype 1 (strain ATCC 23456 / CCUG 17765 / NCTC 10094 / 16M).